Consider the following 251-residue polypeptide: MKKTGYFLLAVIVIVAAAGVGYWKFSGNPDALREIVLERCLPDQLQHQNPAPCAEVKPRAGYVIFKDRHGPLQYLLMPTYRINGTESPLLLEPATPNFFWLAWQARGYMSKKYGHDIPDSAVSLAINSRLGRSQDHLHIHISCIRPDVREQLDNDLTRISTRWLPLPGDLMGHEYLARRVTESELAQRSPFMMLAEEVPEARDHMGRYALAVVRQSDDSFVLLATERNLLTLNRASAEEIQDHSCAILSSR.

Residues 5 to 25 (GYFLLAVIVIVAAAGVGYWKF) traverse the membrane as a helical segment.

Belongs to the Cdh family.

It localises to the cell inner membrane. It carries out the reaction a CDP-1,2-diacyl-sn-glycerol + H2O = a 1,2-diacyl-sn-glycero-3-phosphate + CMP + 2 H(+). The protein operates within phospholipid metabolism; CDP-diacylglycerol degradation; phosphatidate from CDP-diacylglycerol: step 1/1. The polypeptide is CDP-diacylglycerol pyrophosphatase (Salmonella typhi).